We begin with the raw amino-acid sequence, 534 residues long: Cytokine-like nuclear factor N-PAC (534 aa).

Positions 8–66 (QGDLVWGKLGRYPPWPGKIVNPPKDLKKPRGKKCLFVKFFGTEDHAWIKVEQLKPYHAH) constitute a PWWP domain. 2 stretches are compositionally biased toward basic and acidic residues: residues 93–122 (AKAK…QTGE) and 138–157 (RSRD…DKDS). The disordered stretch occupies residues 93-168 (AKAKEHAKEH…SPQPSSLKKL (76 aa)). A DNA-binding region (a.T hook) is located at residues 144-156 (PRKRGRPPKDDKD). The tract at residues 190–193 (DSWL) is interaction with histone H3. The dehydrogenase domain stretch occupies residues 242–534 (GNIIPTDKKI…MSAVYRAYIH (293 aa)). Residues 252-266 (GFLG…IVSN), Thr343, and Lys486 each bind NAD(+).

This sequence belongs to the HIBADH-related family. NP60 subfamily. As to quaternary structure, homotetramere. Binds to mononucleosomes.

Its subcellular location is the nucleus. The protein localises to the chromosome. Functionally, cytokine-like nuclear factor with chromatin gene reader activity involved in chromatin modification and regulation of gene expression. Acts as a nucleosome-destabilizing factor that is recruited to genes during transcriptional activation. Recognizes and binds histone H3 without a preference for specific epigenetic markers and also binds DNA. Interacts with KDM1B and promotes its histone demethylase activity by facilitating the capture of H3 tails, they form a multifunctional enzyme complex that modifies transcribed chromatin and facilitates Pol II transcription through nucleosomes. The polypeptide is Cytokine-like nuclear factor N-PAC (glyr1) (Xenopus tropicalis (Western clawed frog)).